Here is a 650-residue protein sequence, read N- to C-terminus: MAPVSLPPGFRFHPTDEELIIYYLKRKINGRQIELEIIPEVDLYKCEPWDLPEKSFLPSKDLEWYFFSPRDRKYPNGSRTNRATKAGYWKATGKDRKVNSQRRAVGMKKTLVYYRGRAPHGSRTDWVMHEYRLDERECETDTGLQDAYALCRVFKKTAPGPKIIEHYGVVHHHVEQPQWMTSSIDRSPTLDVSCDGRGDDFESSSFSFPTETPMDSMHGGFGMQMSAPHEDGKWMQFLSEDAFNATNPFLTNPVSANFSCLPSKVDVALECARLQHRLTLPPLEVEDFPQDVSLDTKIGILRSNPNEVDILQEFLSVATASQELINGSTSSYPEMWLGASTSSASYVNELSSLVEMGGVGTSNHHESARLQVEIADMEVFKDEKKRVENLRGVKLVNNDLGEIVVEGDESNPTEDIIAQYPIKVTADNSGEAGHRMTDPTDVGGIDTAPIFSQSQPDDFAAGFDDVNPNASFDLYEKVDVNHRLFVSRVAAAKTFFHRIEPSKKVSFHSNPAATAVSKATEKFHFPVTTKVSGRVSIFSKFKALIRDKFLMMRPSHSYQRLGSKETTVNELLQIVSLLLAPKQINGCPTEQELVKKKAKEVMKPGWGREGSNKLWLPLSKGKGISSMFLSGKWTFLTSALAISTPAECDH.

Residues 6–156 form the NAC domain; it reads LPPGFRFHPT…AYALCRVFKK (151 aa). A DNA-binding region spans residues 105-162; sequence VGMKKTLVYYRGRAPHGSRTDWVMHEYRLDERECETDTGLQDAYALCRVFKKTAPGPK.

In terms of tissue distribution, expressed in leaves, roots and flowers.

It localises to the nucleus. Transcription factor that functions as a regulator of the jasmonate (JA) signaling pathway. May regulate the expression of genes encoding JA biosynthetic enzymes, such as lipoxygenase 7 (CM-LOX1), allene oxide synthase 2 (AOS2) and OPDA reductase 7 (OPR7). Involved in abscisic acid-induced leaf senescence. Activates the abscisic acid (ABA) signaling-associated gene ABI5 and the senescence-associated gene NYC1 by directly binding to the mitochondrial dysfunction motif (MDM) present in their promoters. Possesses transcriptional activator activity in yeast. Required for the multiplication of the rice dwarf virus (RDV). The chain is NAC domain-containing protein 54 from Oryza sativa subsp. japonica (Rice).